The sequence spans 296 residues: Nitrogenase iron protein (296 aa).

An ATP-binding site is contributed by 11 to 18 (GKGGIGKS). A [4Fe-4S] cluster-binding site is contributed by cysteine 99. At arginine 102 the chain carries ADP-ribosylarginine; by dinitrogenase reductase ADP-ribosyltransferase. A [4Fe-4S] cluster-binding site is contributed by cysteine 134.

Belongs to the NifH/BchL/ChlL family. As to quaternary structure, homodimer. It depends on [4Fe-4S] cluster as a cofactor. The reversible ADP-ribosylation of Arg-102 inactivates the nitrogenase reductase and regulates nitrogenase activity.

It catalyses the reaction N2 + 8 reduced [2Fe-2S]-[ferredoxin] + 16 ATP + 16 H2O = H2 + 8 oxidized [2Fe-2S]-[ferredoxin] + 2 NH4(+) + 16 ADP + 16 phosphate + 6 H(+). Its function is as follows. The key enzymatic reactions in nitrogen fixation are catalyzed by the nitrogenase complex, which has 2 components: the iron protein and the molybdenum-iron protein. This chain is Nitrogenase iron protein, found in Dechloromonas aromatica (strain RCB).